Here is a 487-residue protein sequence, read N- to C-terminus: GlcNAc-binding protein A (487 aa).

An N-terminal signal peptide occupies residues 1-29 (MKKLPNKSLIALALLSVSGASFGHGYVSA). The 172-residue stretch at 30 to 201 (YENGVAEGRA…SFYNVIDVKF (172 aa)) folds into the Chitin-binding type-4 domain. A Chitin-binding type-3 domain is found at 438-479 (AGTKVLASDGAVYQCKEFPFSGYCTQWSPSATQFEPGKGSHW).

It belongs to the GbpA family.

Its subcellular location is the secreted. Its function is as follows. Probably interacts with GlcNAc residues. May promote attachment to both epithelial cell surfaces and chitin. The sequence is that of GlcNAc-binding protein A from Vibrio campbellii (strain ATCC BAA-1116).